A 284-amino-acid chain; its full sequence is 2-dehydro-3-deoxyphosphooctonate aldolase (284 aa).

It belongs to the KdsA family.

The protein resides in the cytoplasm. The catalysed reaction is D-arabinose 5-phosphate + phosphoenolpyruvate + H2O = 3-deoxy-alpha-D-manno-2-octulosonate-8-phosphate + phosphate. It participates in carbohydrate biosynthesis; 3-deoxy-D-manno-octulosonate biosynthesis; 3-deoxy-D-manno-octulosonate from D-ribulose 5-phosphate: step 2/3. The protein operates within bacterial outer membrane biogenesis; lipopolysaccharide biosynthesis. The polypeptide is 2-dehydro-3-deoxyphosphooctonate aldolase (Pectobacterium atrosepticum (strain SCRI 1043 / ATCC BAA-672) (Erwinia carotovora subsp. atroseptica)).